The chain runs to 629 residues: Chaperone protein HtpG (629 aa).

The interval 1 to 335 (MSSNPTSSVR…TEDLPLNVSR (335 aa)) is a; substrate-binding. Residues 336–547 (ELVQASPVMA…KDALDSQFEK (212 aa)) are b. Residues 548-629 (MMKMMNKDAD…NELVEAATRS (82 aa)) form a c region.

Belongs to the heat shock protein 90 family. In terms of assembly, homodimer.

Its subcellular location is the cytoplasm. Molecular chaperone. Has ATPase activity. This Chlorobaculum tepidum (strain ATCC 49652 / DSM 12025 / NBRC 103806 / TLS) (Chlorobium tepidum) protein is Chaperone protein HtpG.